Consider the following 422-residue polypeptide: Putative serpin-Z8 (422 aa).

The interval 369–393 is RCL; the sequence is GTVAAAATMTRMLPSGVPPPPVDFV.

This sequence belongs to the serpin family.

Probable serine protease inhibitor. This is Putative serpin-Z8 from Oryza sativa subsp. japonica (Rice).